The following is a 251-amino-acid chain: MSGWRLLLTRPDEECAALAASLGEAGVHSSSLPLLAIDPLEETPEQRTLMLDLDRYCAVVVVSKPAARLGLERLDRYWPQPPQQTWCSVGAATAAILEAYGLDVTYPEQGDDSEALLALPAFQDSLRVHDPKVLIMRGEGGREFLAERLRGQGVQVDYLPLYRRRAPDYPAGELLARVRAERLNGLVVSSGQGLQNLYQLAAADWPEIGRLPLFVPSPRVAEMARELGAQRVIDCRGASAPALLAALTSAA.

This sequence belongs to the uroporphyrinogen-III synthase family. Monomer.

The catalysed reaction is hydroxymethylbilane = uroporphyrinogen III + H2O. Its pathway is porphyrin-containing compound metabolism; protoporphyrin-IX biosynthesis; coproporphyrinogen-III from 5-aminolevulinate: step 3/4. In terms of biological role, catalyzes cyclization of the linear tetrapyrrole, hydroxymethylbilane, to the macrocyclic uroporphyrinogen III. This Pseudomonas aeruginosa (strain ATCC 15692 / DSM 22644 / CIP 104116 / JCM 14847 / LMG 12228 / 1C / PRS 101 / PAO1) protein is Uroporphyrinogen-III synthase (hemD).